The chain runs to 109 residues: Nucleoid-associated protein Sputw3181_1707 (109 aa).

Belongs to the YbaB/EbfC family. Homodimer.

It localises to the cytoplasm. The protein resides in the nucleoid. Functionally, binds to DNA and alters its conformation. May be involved in regulation of gene expression, nucleoid organization and DNA protection. The protein is Nucleoid-associated protein Sputw3181_1707 of Shewanella sp. (strain W3-18-1).